Reading from the N-terminus, the 419-residue chain is Zinc metalloprotease RasP (419 aa).

The next 4 membrane-spanning stretches (helical) occupy residues 4–24, 173–193, 349–369, and 391–411; these read VIAFILIFGTLVFFHELGHLI, IAAGPIMNFILAYVILVMLGL, LAAFLSINLGIVNLLPIPALD, and EAFVVFIGVAFLMLLMLVVTW. A Zn(2+)-binding site is contributed by H18. The active site involves E19. H22 lines the Zn(2+) pocket. The PDZ domain occupies 184-269; the sequence is AYVILVMLGL…KLTKYVTPEA (86 aa).

It belongs to the peptidase M50B family. Requires Zn(2+) as cofactor.

It localises to the cell membrane. Its function is as follows. Is responsible for Site-2 cleavage of the RsiW anti-sigma factor. This results, after a third proteolytic step catalyzed by the ClpXP protease, in the release of SigW and the transcription activation of the genes under the control of the sigma-W factor. The protein is Zinc metalloprotease RasP (rasP) of Bacillus licheniformis (strain ATCC 14580 / DSM 13 / JCM 2505 / CCUG 7422 / NBRC 12200 / NCIMB 9375 / NCTC 10341 / NRRL NRS-1264 / Gibson 46).